The chain runs to 373 residues: 3 beta-hydroxysteroid dehydrogenase/Delta 5--&gt;4-isomerase type 3 (373 aa).

Tyr-155 (proton acceptor) is an active-site residue. An NAD(+)-binding site is contributed by Lys-159. The chain crosses the membrane as a helical span at residues 288 to 308 (VPILYWLAFLLETVSFLLSPI).

This sequence belongs to the 3-beta-HSD family. In terms of tissue distribution, liver and kidney. Greater expression in liver.

It localises to the endoplasmic reticulum membrane. The protein resides in the mitochondrion membrane. It carries out the reaction a 3beta-hydroxy-Delta(5)-steroid + NAD(+) = a 3-oxo-Delta(5)-steroid + NADH + H(+). The enzyme catalyses a 3-oxo-Delta(5)-steroid = a 3-oxo-Delta(4)-steroid. It participates in lipid metabolism; steroid biosynthesis. 3-beta-HSD is a bifunctional enzyme, that catalyzes the oxidative conversion of Delta(5)-ene-3-beta-hydroxy steroid, and the oxidative conversion of ketosteroids. The 3-beta-HSD enzymatic system plays a crucial role in the biosynthesis of all classes of hormonal steroids. This chain is 3 beta-hydroxysteroid dehydrogenase/Delta 5--&gt;4-isomerase type 3 (Hsd3b3), found in Mus musculus (Mouse).